Here is an 815-residue protein sequence, read N- to C-terminus: Ataxin-1 (815 aa).

Over residues 1–41 the composition is skewed to basic and acidic residues; the sequence is MKSNQERSNECLPPKKREIPATSRSSEEKAPTLPSDNHRVE. The tract at residues 1-63 is disordered; sequence MKSNQERSNE…GHGGGRHGPA (63 aa). Lys16 is covalently cross-linked (Glycyl lysine isopeptide (Lys-Gly) (interchain with G-Cter in SUMO)). The span at 49–61 shows a compositional bias: gly residues; it reads NPGGRGHGGGRHG. A phosphoserine mark is found at Ser82 and Ser88. 3 disordered regions span residues 185–270, 329–355, and 397–424; these read GSLS…PVHL, EKSRRYGAPSSADLGLGKAGGKSVPHP, and VQQATHREASPSTLNDKSGLHLGKPGHR. Lys194 is covalently cross-linked (Glycyl lysine isopeptide (Lys-Gly) (interchain with G-Cter in SUMO)). Over residues 197–226 the composition is skewed to low complexity; the sequence is QQQQQQQQQQQQHQHQQQQQQQQQQQQQQH. Phosphoserine is present on residues Ser238 and Ser253. Polar residues predominate over residues 243–260; sequence QQNQYVHISSSPQNTGRT. The self-association stretch occupies residues 494–604; sequence VGSTDMEASG…TEDFIQSAEI (111 aa). The interval 538-815 is interaction with USP7; it reads LVTQAAYPAM…CIEGRSNVGK (278 aa). The tract at residues 540-766 is RNA-binding; that stretch reads TQAAYPAMVQ…FLTKIEPSKP (227 aa). Residues 562–693 enclose the AXH domain; it reads SPAAAPPTLP…SLTLKNLKNG (132 aa). Glycyl lysine isopeptide (Lys-Gly) (interchain with G-Cter in SUMO) cross-links involve residues Lys609, Lys696, and Lys745. Residues 762–798 form a disordered region; sequence EPSKPAATRKRRWSAPESRKLEKSEDEPPLTLPKPSL. Phosphoserine is present on Ser775. The Nuclear localization signal motif lies at 794–797; the sequence is PKPS.

It belongs to the ATXN1 family. As to quaternary structure, homooligomer. Interacts with CIC. Interacts with ANP32A, PQBP1, UBQLN4, ATXN1L and USP7. Directly interacts with RBPJ; this interaction is disrupted in the presence of Notch intracellular domain. Competes with ATXN1L for RBPJ-binding. Found in a complex with CIC and ATXN1L. Post-translationally, ubiquitinated by UBE3A, leading to its degradation by the proteasome. The presence of expanded poly-Gln repeats in spinocerebellar ataxia 1 (SCA1) patients impairs ubiquitination and degradation, leading to accumulation of ATXN1 in neurons and subsequent toxicity. Phosphorylation at Ser-775 increases the pathogenicity of proteins with an expanded polyglutamine tract. In terms of processing, sumoylation is dependent on nuclear localization and phosphorylation at Ser-775. It is reduced in the presence of an expanded polyglutamine tract. In terms of tissue distribution, widely expressed throughout the body.

Its subcellular location is the cytoplasm. It is found in the nucleus. Functionally, chromatin-binding factor that repress Notch signaling in the absence of Notch intracellular domain by acting as a CBF1 corepressor. Binds to the HEY promoter and might assist, along with NCOR2, RBPJ-mediated repression. Binds RNA in vitro. May be involved in RNA metabolism. In concert with CIC and ATXN1L, involved in brain development. This is Ataxin-1 (ATXN1) from Homo sapiens (Human).